The sequence spans 136 residues: MARTKQTARKSTGGKAPRKQLASKAARKSAPVSGGVKKPHRYKPGTVALREIRRFQKSTELLIRKLPFQRLVREIAQDFKSDLRFQSSAIGALQEAVEAYLVSLFEDTNLCAIHAKRVTIQKKDIQLARRLRGERS.

The tract at residues methionine 1–tyrosine 42 is disordered. Residue lysine 5 is modified to N6,N6,N6-trimethyllysine; alternate. Lysine 5 carries the N6,N6-dimethyllysine; alternate modification. N6-methyllysine; alternate occurs at positions 5 and 10. Position 10 is an N6-acetyllysine; alternate (lysine 10). Serine 11 bears the Phosphoserine mark. Lysine 15 is subject to N6,N6-dimethyllysine; alternate. Residues lysine 15, lysine 19, lysine 24, lysine 28, and lysine 37 each carry the N6-acetyllysine; alternate modification. 4 positions are modified to N6-methyllysine; alternate: lysine 19, lysine 24, lysine 28, and lysine 37. N6,N6,N6-trimethyllysine; alternate is present on residues lysine 28 and lysine 37. Lysine 28 and lysine 37 each carry N6,N6-dimethyllysine; alternate. Lysine 57 and lysine 65 each carry N6-acetyllysine. At lysine 80 the chain carries N6,N6,N6-trimethyllysine; alternate. At lysine 80 the chain carries N6,N6-dimethyllysine; alternate. Position 80 is an N6-methyllysine; alternate (lysine 80).

This sequence belongs to the histone H3 family. As to quaternary structure, the nucleosome is a histone octamer containing two molecules each of H2A, H2B, H3 and H4 assembled in one H3-H4 heterotetramer and two H2A-H2B heterodimers. The octamer wraps approximately 147 bp of DNA. Post-translationally, phosphorylated by IPL1 to form H3S10ph. H3S10ph promotes subsequent H3K14ac formation by GCN5 and is required for transcriptional activation through TBP recruitment to the promoters. Mono-, di- and trimethylated by the COMPASS complex to form H3K4me1/2/3. H3K4me activates gene expression by regulating transcription elongation and plays a role in telomere length maintenance. H3K4me enrichment correlates with transcription levels, and occurs in a 5' to 3' gradient with H3K4me3 enrichment at the 5'-end of genes, shifting to H3K4me2 and then H3K4me1. Methylated by SET2 to form H3K36me. H3K36me represses gene expression. Methylated by DOT1 to form H3K79me. H3K79me is required for association of SIR proteins with telomeric regions and for telomeric silencing. The COMPASS-mediated formation of H3K4me2/3 and the DOT1-mediated formation of H3K79me require H2BK123ub1. In terms of processing, acetylation of histone H3 leads to transcriptional activation. H3K14ac formation by GCN5 is promoted by H3S10ph. H3K14ac can also be formed by ESA1. H3K56ac formation occurs predominantly in newly synthesized H3 molecules during G1, S and G2/M of the cell cycle and may be involved in DNA repair.

The protein localises to the nucleus. It is found in the chromosome. Core component of nucleosome. Nucleosomes wrap and compact DNA into chromatin, limiting DNA accessibility to the cellular machineries which require DNA as a template. Histones thereby play a central role in transcription regulation, DNA repair, DNA replication and chromosomal stability. DNA accessibility is regulated via a complex set of post-translational modifications of histones, also called histone code, and nucleosome remodeling. The chain is Histone H3.3 (HHT3) from Debaryomyces hansenii (strain ATCC 36239 / CBS 767 / BCRC 21394 / JCM 1990 / NBRC 0083 / IGC 2968) (Yeast).